The primary structure comprises 219 residues: MNIEELAARIDHTVLGPTTTMDEVTDVLSDAAAYGMNACIPPCYLDAAGDTDMVTDSGVTLVSVIGFPHGQHASIAKRKEAVTAWQAGADEIDVVLNIGRLKTSATETVTHDIAEVVAAVPIPVKVIIETTLLNDDEKRRACKVAVDADADFIKTSTGFANGGATTADVEVLSSYLPVKASGGISSYETAKSMLDAGAERIGASAGVEILEDAPDIYYD.

The Proton donor/acceptor role is filled by Asp-93. Lys-154 acts as the Schiff-base intermediate with acetaldehyde in catalysis. Lys-179 serves as the catalytic Proton donor/acceptor.

Belongs to the DeoC/FbaB aldolase family. DeoC type 1 subfamily.

It localises to the cytoplasm. It carries out the reaction 2-deoxy-D-ribose 5-phosphate = D-glyceraldehyde 3-phosphate + acetaldehyde. Its pathway is carbohydrate degradation; 2-deoxy-D-ribose 1-phosphate degradation; D-glyceraldehyde 3-phosphate and acetaldehyde from 2-deoxy-alpha-D-ribose 1-phosphate: step 2/2. Functionally, catalyzes a reversible aldol reaction between acetaldehyde and D-glyceraldehyde 3-phosphate to generate 2-deoxy-D-ribose 5-phosphate. The polypeptide is Deoxyribose-phosphate aldolase (Haloquadratum walsbyi (strain DSM 16790 / HBSQ001)).